A 517-amino-acid chain; its full sequence is Perilipin-1 (517 aa).

Ser81 carries the phosphoserine modification. At Thr85 the chain carries Phosphothreonine. 5 positions are modified to phosphoserine: Ser126, Ser130, Ser132, Ser137, and Ser174. The interval 197 to 217 (VESAPSSGRQKTQKAPKAKPS) is disordered. 3 positions are modified to phosphothreonine: Thr224, Thr299, and Thr301. The segment at 285 to 321 (HNLAASKDENHEDQTDTEGEETDEEEEEEESEAEENV) is disordered. Residues 291 to 322 (KDENHEDQTDTEGEETDEEEEEEESEAEENVL) are required for interaction with CIDEC. The segment covering 299–319 (TDTEGEETDEEEEEEESEAEE) has biased composition (acidic residues). Residues Ser315, Ser385, Ser387, Pro408, Ser411, Ser434, Ser436, Ser440, Ser460, Ser492, and Ser494 each carry the phosphoserine modification. Positions 415-495 (PESEFQDIDN…KPARRVSDSF (81 aa)) are disordered. The segment covering 483-492 (PREKPARRVS) has biased composition (basic and acidic residues).

The protein belongs to the perilipin family. As to quaternary structure, interacts with ABHD5. Interacts with CIDEC. Interacts with AQP7. Major cAMP-dependent protein kinase substrate in adipocytes, also dephosphorylated by PP1. When phosphorylated, may be maximally sensitive to HSL. When unphosphorylated, may play a role in the inhibition of lipolysis, by acting as a barrier in lipid droplet. In terms of processing, the N-terminus is blocked. In terms of tissue distribution, adipocytes.

Its subcellular location is the endoplasmic reticulum. The protein resides in the lipid droplet. Its function is as follows. Modulator of adipocyte lipid metabolism. Coats lipid storage droplets to protect them from breakdown by hormone-sensitive lipase (HSL). Its absence may result in leanness. Plays a role in unilocular lipid droplet formation by activating CIDEC. Their interaction promotes lipid droplet enlargement and directional net neutral lipid transfer. May modulate lipolysis and triglyceride levels. The chain is Perilipin-1 (Plin1) from Rattus norvegicus (Rat).